We begin with the raw amino-acid sequence, 95 residues long: Aspartyl/glutamyl-tRNA(Asn/Gln) amidotransferase subunit C (95 aa).

It belongs to the GatC family. As to quaternary structure, heterotrimer of A, B and C subunits.

It catalyses the reaction L-glutamyl-tRNA(Gln) + L-glutamine + ATP + H2O = L-glutaminyl-tRNA(Gln) + L-glutamate + ADP + phosphate + H(+). The enzyme catalyses L-aspartyl-tRNA(Asn) + L-glutamine + ATP + H2O = L-asparaginyl-tRNA(Asn) + L-glutamate + ADP + phosphate + 2 H(+). In terms of biological role, allows the formation of correctly charged Asn-tRNA(Asn) or Gln-tRNA(Gln) through the transamidation of misacylated Asp-tRNA(Asn) or Glu-tRNA(Gln) in organisms which lack either or both of asparaginyl-tRNA or glutaminyl-tRNA synthetases. The reaction takes place in the presence of glutamine and ATP through an activated phospho-Asp-tRNA(Asn) or phospho-Glu-tRNA(Gln). This chain is Aspartyl/glutamyl-tRNA(Asn/Gln) amidotransferase subunit C, found in Nitrosococcus oceani (strain ATCC 19707 / BCRC 17464 / JCM 30415 / NCIMB 11848 / C-107).